Here is a 214-residue protein sequence, read N- to C-terminus: Killer cell lectin-like receptor subfamily B member 1 (214 aa).

Residues 1 to 42 (MDAPVLYAELNLAETRGLRCTSAPSLPQDACQGPGWHRVALK) are Cytoplasmic-facing. The chain crosses the membrane as a helical; Signal-anchor for type II membrane protein span at residues 43–63 (LGCAGLIFLLMVLSVLVGFLV). The Extracellular segment spans residues 64-214 (QKPLIEKCSV…WICQKTLKHV (151 aa)). The C-type lectin domain occupies 98 to 208 (HCDKCLFTSQ…CSSDNHWICQ (111 aa)). 2 cysteine pairs are disulfide-bonded: Cys-119/Cys-207 and Cys-186/Cys-199.

The protein resides in the membrane. The sequence is that of Killer cell lectin-like receptor subfamily B member 1 (Klrb1) from Mus musculus (Mouse).